Here is a 558-residue protein sequence, read N- to C-terminus: Protein SET DOMAIN GROUP 41 (558 aa).

An SET domain is found at 115 to 249 (PSISVAIHHA…SGEEITVSYI (135 aa)).

This sequence belongs to the class V-like SAM-binding methyltransferase superfamily.

This Arabidopsis thaliana (Mouse-ear cress) protein is Protein SET DOMAIN GROUP 41 (SDG41).